Reading from the N-terminus, the 30-residue chain is Cyclotide hyen-F (30 aa).

The cyclopeptide (Gly-Asn) cross-link spans 1–30 (GLPCGESCVYIPCISTVLGCSCSNKVCYRN). Intrachain disulfides connect Cys-4-Cys-20, Cys-8-Cys-22, and Cys-13-Cys-27.

In terms of processing, this is a cyclic peptide. As to expression, detected in seeds (at protein level).

In terms of biological role, probably participates in a plant defense mechanism. In Pigea enneasperma (Spade flower), this protein is Cyclotide hyen-F.